The sequence spans 180 residues: ATP synthase subunit delta (180 aa).

Belongs to the ATPase delta chain family. As to quaternary structure, F-type ATPases have 2 components, F(1) - the catalytic core - and F(0) - the membrane proton channel. F(1) has five subunits: alpha(3), beta(3), gamma(1), delta(1), epsilon(1). F(0) has three main subunits: a(1), b(2) and c(10-14). The alpha and beta chains form an alternating ring which encloses part of the gamma chain. F(1) is attached to F(0) by a central stalk formed by the gamma and epsilon chains, while a peripheral stalk is formed by the delta and b chains.

The protein localises to the cell membrane. Functionally, f(1)F(0) ATP synthase produces ATP from ADP in the presence of a proton or sodium gradient. F-type ATPases consist of two structural domains, F(1) containing the extramembraneous catalytic core and F(0) containing the membrane proton channel, linked together by a central stalk and a peripheral stalk. During catalysis, ATP synthesis in the catalytic domain of F(1) is coupled via a rotary mechanism of the central stalk subunits to proton translocation. In terms of biological role, this protein is part of the stalk that links CF(0) to CF(1). It either transmits conformational changes from CF(0) to CF(1) or is implicated in proton conduction. This Limosilactobacillus reuteri (strain DSM 20016) (Lactobacillus reuteri) protein is ATP synthase subunit delta.